We begin with the raw amino-acid sequence, 255 residues long: tRNA (guanine-N(7)-)-methyltransferase (255 aa).

A disordered region spans residues 1-30; sequence MMHDDPNEAGLPPDDAALPDEAADGADEVN. The span at 17 to 27 shows a compositional bias: acidic residues; the sequence is ALPDEAADGAD. S-adenosyl-L-methionine contacts are provided by Glu-86, Glu-111, Asp-138, and Asp-161. Asp-161 is a catalytic residue. Residues Lys-165, Asp-197, and 232–235 contribute to the substrate site; that span reads TKFE.

The protein belongs to the class I-like SAM-binding methyltransferase superfamily. TrmB family.

The catalysed reaction is guanosine(46) in tRNA + S-adenosyl-L-methionine = N(7)-methylguanosine(46) in tRNA + S-adenosyl-L-homocysteine. It functions in the pathway tRNA modification; N(7)-methylguanine-tRNA biosynthesis. In terms of biological role, catalyzes the formation of N(7)-methylguanine at position 46 (m7G46) in tRNA. The sequence is that of tRNA (guanine-N(7)-)-methyltransferase from Burkholderia vietnamiensis (strain G4 / LMG 22486) (Burkholderia cepacia (strain R1808)).